Consider the following 275-residue polypeptide: tRNA uridine(34) hydroxylase (275 aa).

Residues 122-218 (SRSDVYTIDT…YFKSTQNKNS (97 aa)) enclose the Rhodanese domain. Cys-178 acts as the Cysteine persulfide intermediate in catalysis.

The protein belongs to the TrhO family.

It catalyses the reaction uridine(34) in tRNA + AH2 + O2 = 5-hydroxyuridine(34) in tRNA + A + H2O. Its function is as follows. Catalyzes oxygen-dependent 5-hydroxyuridine (ho5U) modification at position 34 in tRNAs. This Ehrlichia chaffeensis (strain ATCC CRL-10679 / Arkansas) protein is tRNA uridine(34) hydroxylase.